A 31-amino-acid polypeptide reads, in one-letter code: Chassatide C6 (31 aa).

The cyclopeptide (Gly-Asn) cross-link spans Gly-1–Asn-31. 3 disulfide bridges follow: Cys-5/Cys-21, Cys-9/Cys-23, and Cys-14/Cys-28.

Post-translationally, this is a cyclic peptide. Expressed in fruit, pedicel, root and stem but not in leaf (at protein level).

Probably participates in a plant defense mechanism. The protein is Chassatide C6 of Chassalia chartacea (Chassalia curviflora).